We begin with the raw amino-acid sequence, 311 residues long: Putative ABC transporter ATP-binding protein MG467 (311 aa).

An ABC transporter domain is found at 84-310; sequence ITINKMWKNV…IVSNQLVRPL (227 aa). ATP is bound at residue 122–129; that stretch reads GSSGSGKT.

The protein belongs to the ABC transporter superfamily.

This chain is Putative ABC transporter ATP-binding protein MG467, found in Mycoplasma genitalium (strain ATCC 33530 / DSM 19775 / NCTC 10195 / G37) (Mycoplasmoides genitalium).